Consider the following 672-residue polypeptide: Prion-like-(Q/N-rich) domain-bearing protein 25 (672 aa).

Residues 26 to 46 (VPPPIMICLFFLLLQIFVISV) form a helical membrane-spanning segment.

Its subcellular location is the membrane. This Caenorhabditis elegans protein is Prion-like-(Q/N-rich) domain-bearing protein 25 (pqn-25).